The sequence spans 198 residues: T-cell surface glycoprotein CD3 epsilon chain (198 aa).

An N-terminal signal peptide occupies residues 1–21 (MQSGTRWRVLGLCLLSIGVWG). At 22-117 (QDGNEEMGSI…RVCENCMEMD (96 aa)) the chain is on the extracellular side. Residues 37–107 (QVSISGTTVI…DASHHLYLKA (71 aa)) enclose the Ig-like domain. A disulfide bridge links C49 with C89. The helical transmembrane segment at 118–138 (VMAVATIVIVDICITLGLLLL) threads the bilayer. Over 139–198 (VYYWSKNRKAKAKPVTRGAGAGGRQRGQNKERPPPVPNPDYEPIRKGQQDLYSGLNQRRI) the chain is Cytoplasmic. A disordered region spans residues 152-198 (PVTRGAGAGGRQRGQNKERPPPVPNPDYEPIRKGQQDLYSGLNQRRI). Positions 166-183 (QNKERPPPVPNPDYEPIR) are NUMB-binding region. Positions 169–196 (ERPPPVPNPDYEPIRKGQQDLYSGLNQR) constitute an ITAM domain. A proline-rich sequence region spans residues 170-177 (RPPPVPNP). Phosphotyrosine is present on residues Y179 and Y190. The span at 188–198 (DLYSGLNQRRI) shows a compositional bias: polar residues.

As to quaternary structure, the TCR-CD3 complex is composed of a CD3D/CD3E and a CD3G/CD3E heterodimers that preferentially associate with TCRalpha and TCRbeta, respectively, to form TCRalpha/CD3E/CD3G and TCRbeta/CD3G/CD3E trimers. In turn, the hexamer interacts with CD3Z homodimer to form the TCR-CD3 complex. Alternatively, TCRalpha and TCRbeta can be replaced by TCRgamma and TCRdelta. Interacts with CD6. Interacts (via Proline-rich sequence) with NCK1; the interaction is ligand dependent but independent of tyrosine kinase activation. In terms of processing, phosphorylated on Tyr residues after T-cell receptor triggering by LCK in association with CD4/CD8.

Its subcellular location is the cell membrane. Its function is as follows. Part of the TCR-CD3 complex present on T-lymphocyte cell surface that plays an essential role in adaptive immune response. When antigen presenting cells (APCs) activate T-cell receptor (TCR), TCR-mediated signals are transmitted across the cell membrane by the CD3 chains CD3D, CD3E, CD3G and CD3Z. All CD3 chains contain immunoreceptor tyrosine-based activation motifs (ITAMs) in their cytoplasmic domain. Upon TCR engagement, these motifs become phosphorylated by Src family protein tyrosine kinases LCK and FYN, resulting in the activation of downstream signaling pathways. In addition of this role of signal transduction in T-cell activation, CD3E plays an essential role in correct T-cell development. Also participates in internalization and cell surface down-regulation of TCR-CD3 complexes via endocytosis sequences present in CD3E cytosolic region. In addition to its role as a TCR coreceptor, it serves as a receptor for ITPRIPL1. Ligand recognition inhibits T-cell activation by promoting interaction with NCK1, which prevents CD3E-ZAP70 interaction and blocks the ERK-NFkB signaling cascade and calcium influx. This chain is T-cell surface glycoprotein CD3 epsilon chain (CD3E), found in Macaca fascicularis (Crab-eating macaque).